A 263-amino-acid chain; its full sequence is S-adenosylmethionine decarboxylase proenzyme (263 aa).

Ser-113 acts as the Schiff-base intermediate with substrate; via pyruvic acid in catalysis. A Pyruvic acid (Ser); by autocatalysis modification is found at Ser-113. His-118 (proton acceptor; for processing activity) is an active-site residue. Cys-141 (proton donor; for catalytic activity) is an active-site residue.

The protein belongs to the prokaryotic AdoMetDC family. Type 2 subfamily. As to quaternary structure, heterooctamer of four alpha and four beta chains arranged as a tetramer of alpha/beta heterodimers. Pyruvate is required as a cofactor. Post-translationally, is synthesized initially as an inactive proenzyme. Formation of the active enzyme involves a self-maturation process in which the active site pyruvoyl group is generated from an internal serine residue via an autocatalytic post-translational modification. Two non-identical subunits are generated from the proenzyme in this reaction, and the pyruvate is formed at the N-terminus of the alpha chain, which is derived from the carboxyl end of the proenzyme. The post-translation cleavage follows an unusual pathway, termed non-hydrolytic serinolysis, in which the side chain hydroxyl group of the serine supplies its oxygen atom to form the C-terminus of the beta chain, while the remainder of the serine residue undergoes an oxidative deamination to produce ammonia and the pyruvoyl group blocking the N-terminus of the alpha chain.

The enzyme catalyses S-adenosyl-L-methionine + H(+) = S-adenosyl 3-(methylsulfanyl)propylamine + CO2. Its pathway is amine and polyamine biosynthesis; S-adenosylmethioninamine biosynthesis; S-adenosylmethioninamine from S-adenosyl-L-methionine: step 1/1. Catalyzes the decarboxylation of S-adenosylmethionine to S-adenosylmethioninamine (dcAdoMet), the propylamine donor required for the synthesis of the polyamines spermine and spermidine from the diamine putrescine. This chain is S-adenosylmethionine decarboxylase proenzyme, found in Marinobacter nauticus (strain ATCC 700491 / DSM 11845 / VT8) (Marinobacter aquaeolei).